The sequence spans 96 residues: Small ribosomal subunit protein bS6 (96 aa).

The protein belongs to the bacterial ribosomal protein bS6 family.

Its function is as follows. Binds together with bS18 to 16S ribosomal RNA. In Streptococcus pneumoniae serotype 2 (strain D39 / NCTC 7466), this protein is Small ribosomal subunit protein bS6.